The following is a 1627-amino-acid chain: Pleckstrin homology domain-containing family G member 4B (1627 aa).

Disordered stretches follow at residues 211–349 (YSSC…VQPR), 381–475 (LTGA…GQAV), 501–537 (VSTD…GTGD), 959–1008 (SEAA…PAQP), 1049–1111 (TTAH…SKGL), and 1124–1159 (PLWQ…QVGS). Polar residues predominate over residues 241–251 (GSASCPDTLTS). 2 stretches are compositionally biased toward basic and acidic residues: residues 262–273 (QLRHLPYPERAE) and 310–322 (ERPD…DRPK). The span at 465–474 (RPGGHLGGQA) shows a compositional bias: gly residues. A compositionally biased stretch (basic and acidic residues) spans 975-985 (PKHERAQEAMR). A compositionally biased stretch (polar residues) spans 1057–1068 (SACSSEPTQTLA). Residues 1070–1081 (RPRKHPQKKMIK) show a composition bias toward basic residues. 2 stretches are compositionally biased toward polar residues: residues 1101–1111 (PDHTSVFSKGL) and 1133–1144 (PVTQSRSLSSPS). The DH domain occupies 1161–1340 (RLRHIMAEMI…CFQLRHGNDL (180 aa)). Residues 1352 to 1460 (NLKEQGQLRC…WTDVIGRILW (109 aa)) enclose the PH domain. Residues 1519–1558 (KGTESQMRGSTAVSSSDHAAPFKRPHSTISDSSTSSSSSQ) are disordered. The span at 1521 to 1535 (TESQMRGSTAVSSSD) shows a compositional bias: polar residues. Residues 1545 to 1558 (STISDSSTSSSSSQ) show a composition bias toward low complexity.

In terms of assembly, found in a complex with ARHGEF11 and ARHGEF12; binding to ARHGEF11 and ARHGEF12 enhances CDC42 GEF activity of PLEKHG4B, and PLEKHG4B, in turn, inhibits ARHGEF11- and ARHGEF12-mediated RHOA activation. Interacts with ANXA2; this interaction is required for PLEKHG4B localization to cell-cell adhesions.

The protein localises to the basal cell membrane. Its subcellular location is the cell junction. The protein resides in the nucleus. It is found in the cytoplasm. Guanine nucleotide exchange factor (GEF) which specifically activates small GTPase CDC42 by exchanging bound GDP for free GTP. Plays a role in actin cytoskeletal remodeling in the late stage of cell-cell junction formation by regulating the contractility of actin filaments, which prompts the conversion from 'open' to 'closed' junctions. The protein is Pleckstrin homology domain-containing family G member 4B of Homo sapiens (Human).